A 523-amino-acid polypeptide reads, in one-letter code: Ribonuclease Y (523 aa).

A helical membrane pass occupies residues 3–23 (VWYAIGSIIFGLLVGVSVYLI). Residues 213–279 (LVNVINLPND…TKTIEKLVED (67 aa)) form the KH domain. Residues 339-432 (ALGHSIEVAN…VCAADTLSAA (94 aa)) enclose the HD domain.

It belongs to the RNase Y family.

Its subcellular location is the cell membrane. In terms of biological role, endoribonuclease that initiates mRNA decay. In Helicobacter hepaticus (strain ATCC 51449 / 3B1), this protein is Ribonuclease Y.